The chain runs to 73 residues: UPF0235 protein HY04AAS1_1378 (73 aa).

This sequence belongs to the UPF0235 family.

This is UPF0235 protein HY04AAS1_1378 from Hydrogenobaculum sp. (strain Y04AAS1).